The following is a 119-amino-acid chain: Flagellar transcriptional regulator FlhD (119 aa).

This sequence belongs to the FlhD family. Homodimer; disulfide-linked. Forms a heterohexamer composed of two FlhC and four FlhD subunits. Each FlhC binds a FlhD dimer, forming a heterotrimer, and a hexamer assembles by dimerization of two heterotrimers.

The protein localises to the cytoplasm. Functionally, functions in complex with FlhC as a master transcriptional regulator that regulates transcription of several flagellar and non-flagellar operons by binding to their promoter region. Activates expression of class 2 flagellar genes, including fliA, which is a flagellum-specific sigma factor that turns on the class 3 genes. Also regulates genes whose products function in a variety of physiological pathways. In Serratia marcescens, this protein is Flagellar transcriptional regulator FlhD.